The chain runs to 465 residues: Ribulose bisphosphate carboxylase large chain (465 aa).

At Lys4 the chain carries N6,N6,N6-trimethyllysine. Asn113 and Thr163 together coordinate substrate. Lys165 (proton acceptor) is an active-site residue. Residue Lys167 participates in substrate binding. Positions 191, 193, and 194 each coordinate Mg(2+). Lys191 is subject to N6-carboxylysine. His284 functions as the Proton acceptor in the catalytic mechanism. 3 residues coordinate substrate: Arg285, His317, and Ser369.

It belongs to the RuBisCO large chain family. Type I subfamily. In terms of assembly, heterohexadecamer of 8 large chains and 8 small chains; disulfide-linked. The disulfide link is formed within the large subunit homodimers. It depends on Mg(2+) as a cofactor. In terms of processing, the disulfide bond which can form in the large chain dimeric partners within the hexadecamer appears to be associated with oxidative stress and protein turnover.

The protein localises to the plastid. It localises to the chloroplast. It carries out the reaction 2 (2R)-3-phosphoglycerate + 2 H(+) = D-ribulose 1,5-bisphosphate + CO2 + H2O. It catalyses the reaction D-ribulose 1,5-bisphosphate + O2 = 2-phosphoglycolate + (2R)-3-phosphoglycerate + 2 H(+). Functionally, ruBisCO catalyzes two reactions: the carboxylation of D-ribulose 1,5-bisphosphate, the primary event in carbon dioxide fixation, as well as the oxidative fragmentation of the pentose substrate in the photorespiration process. Both reactions occur simultaneously and in competition at the same active site. The protein is Ribulose bisphosphate carboxylase large chain of Epacris sp.